Consider the following 581-residue polypeptide: Ras-specific guanine nucleotide-releasing factor RalGPS1 (581 aa).

The interval methionine 1 to serine 31 is disordered. The Ras-GEF domain occupies threonine 49–glycine 288. Residues proline 320–serine 339 form a disordered region. Positions proline 329–proline 332 match the PXXP motif. One can recognise a PH domain in the interval serine 455 to arginine 567.

It localises to the cytoplasm. The protein resides in the cell membrane. Functionally, guanine nucleotide exchange factor. May be involved in cytoskeletal organization. This chain is Ras-specific guanine nucleotide-releasing factor RalGPS1 (ralgps1), found in Danio rerio (Zebrafish).